The chain runs to 371 residues: 2-aminoethylphosphonate--pyruvate transaminase (371 aa).

Lys195 is subject to N6-(pyridoxal phosphate)lysine.

Belongs to the class-V pyridoxal-phosphate-dependent aminotransferase family. PhnW subfamily. Homodimer. Requires pyridoxal 5'-phosphate as cofactor.

It carries out the reaction (2-aminoethyl)phosphonate + pyruvate = phosphonoacetaldehyde + L-alanine. Functionally, involved in phosphonate degradation. The sequence is that of 2-aminoethylphosphonate--pyruvate transaminase from Pseudomonas aeruginosa (strain UCBPP-PA14).